Reading from the N-terminus, the 91-residue chain is Cell division protein ZapA (91 aa).

Positions 59-86 form a coiled coil; that stretch reads TAVNIANEYLKLKEEYDRLAAKLRREKG.

The protein belongs to the ZapA family. Type 2 subfamily. Homodimer. Interacts with FtsZ.

It is found in the cytoplasm. In terms of biological role, activator of cell division through the inhibition of FtsZ GTPase activity, therefore promoting FtsZ assembly into bundles of protofilaments necessary for the formation of the division Z ring. It is recruited early at mid-cell but it is not essential for cell division. In Geobacillus thermodenitrificans (strain NG80-2), this protein is Cell division protein ZapA.